Reading from the N-terminus, the 132-residue chain is Small ribosomal subunit protein bS6 (132 aa).

The disordered stretch occupies residues 96–132 (HAEGPSIQMQKRDERERGDRGDRSDRGDRGDRGGFRR). Positions 105 to 132 (QKRDERERGDRGDRSDRGDRGDRGGFRR) are enriched in basic and acidic residues.

The protein belongs to the bacterial ribosomal protein bS6 family.

Binds together with bS18 to 16S ribosomal RNA. The chain is Small ribosomal subunit protein bS6 from Cereibacter sphaeroides (strain ATCC 17023 / DSM 158 / JCM 6121 / CCUG 31486 / LMG 2827 / NBRC 12203 / NCIMB 8253 / ATH 2.4.1.) (Rhodobacter sphaeroides).